The following is a 351-amino-acid chain: Modulator of apoptosis 1 (351 aa).

The LIR motif lies at 49–52 (YRLL). The interval 120–127 (LSRALGHE) is BH3-like. Positions 202–205 (KRRR) are RASSF1-binding.

This sequence belongs to the PNMA family. In terms of assembly, homodimer. Under normal circumstances, held in an inactive conformation by an intramolecular interaction. Interacts with BAX. Binding to RASSF1 isoform A (RASSF1A) relieves this inhibitory interaction and allows further binding to BAX. Also binds to BCL2 and BCLX. Recruited to the TNFRSF1A and TNFRSF10A complexes in response to their respective cognate ligand, after internalization. Interacts with TRIM39. Interacts with RASSF6. Interacts with ATG8 proteins MAP1LC3A, MAP1LC3B and MAP1LC3C. Does not interact with ATG8 proteins GABARAPL1, GABARAPL2 and GABARAP. Interacts with SQSTM1; promoting dissociation of SQSTM1 inclusion bodies that sequester KEAP1. In terms of processing, ubiquitinated and degraded during mitotic exit by APC/C-Cdh1, this modification is inhibited by TRIM39. In terms of tissue distribution, widely expressed, with high levels in heart and brain.

The protein resides in the cytoplasm. It localises to the cytosol. The protein localises to the mitochondrion outer membrane. Its subcellular location is the extracellular vesicle membrane. Its function is as follows. Retrotransposon-derived protein that forms virion-like capsids. Acts as an effector of BAX during apoptosis: enriched at outer mitochondria membrane and associates with BAX upon induction of apoptosis, facilitating BAX-dependent mitochondrial outer membrane permeabilization and apoptosis. Required for death receptor-dependent apoptosis. When associated with RASSF1, promotes BAX conformational change and translocation to mitochondrial membranes in response to TNF and TNFSF10 stimulation. Also promotes autophagy: promotes phagophore closure via association with ATG8 proteins. Acts as an inhibitor of the NFE2L2/NRF2 pathway via interaction with SQSTM1: interaction promotes dissociation of SQSTM1 inclusion bodies that sequester KEAP1, relieving inactivation of the BCR(KEAP1) complex. This chain is Modulator of apoptosis 1, found in Homo sapiens (Human).